A 509-amino-acid polypeptide reads, in one-letter code: Cardiolipin synthase 1 (509 aa).

Transmembrane regions (helical) follow at residues 4-24, 30-50, and 59-79; these read PIIQ…LLNT, YTFV…VIFI, and LAWF…YSIF. PLD phosphodiesterase domains follow at residues 238–265 and 422–449; these read VNYR…GDEY and KDGF…DVRS. Residues His243, Lys245, Asp250, His427, Lys429, and Asp434 contribute to the active site.

The protein belongs to the phospholipase D family. Cardiolipin synthase subfamily.

It is found in the cell membrane. It carries out the reaction 2 a 1,2-diacyl-sn-glycero-3-phospho-(1'-sn-glycerol) = a cardiolipin + glycerol. Its function is as follows. Catalyzes the reversible phosphatidyl group transfer from one phosphatidylglycerol molecule to another to form cardiolipin (CL) (diphosphatidylglycerol) and glycerol. The polypeptide is Cardiolipin synthase 1 (cls1) (Bacillus anthracis).